Reading from the N-terminus, the 125-residue chain is Cu-Zn superoxide dismutase-like protein OPG175 (125 aa).

Residues Cys-52 and Cys-102 are joined by a disulfide bond.

The protein belongs to the Cu-Zn superoxide dismutase family.

It localises to the virion. It is found in the host cytoplasm. Its function is as follows. Superoxide dismutase-like protein with no enzymatic activity. The chain is Cu-Zn superoxide dismutase-like protein OPG175 (OPG175) from Vaccinia virus (strain Western Reserve) (VACV).